Reading from the N-terminus, the 978-residue chain is Tyrosine-protein kinase transforming protein fms (978 aa).

Residues 1-543 (RMPSGPGHYG…IGAHTPLPDE (543 aa)) lie on the Extracellular side of the membrane. Ig-like C2-type domains follow at residues 55 to 134 (PVIQ…IHLY), 141 to 231 (PWKV…KVQK), 236 to 331 (PATL…RVVE), 333 to 431 (AYSN…LTLR), and 434 to 533 (PEVR…WPIS). Cys76 and Cys118 are joined by a disulfide. 11 N-linked (GlcNAc...) asparagine; by host glycosylation sites follow: Asn79, Asn107, Asn128, Asn187, Asn309, Asn320, Asn336, Asn369, Asn444, Asn511, and Asn524. 2 disulfides stabilise this stretch: Cys161-Cys211 and Cys258-Cys312. Residues Cys451 and Cys516 are joined by a disulfide bond. Residues 544 to 568 (LLFTPVLLTCMSIMALLLLLLLLLL) traverse the membrane as a helical segment. At 569–978 (YKYKQKPKYQ…PWQRTPPVAR (410 aa)) the chain is on the cytoplasmic side. The Protein kinase domain maps to 613-942 (LQFGKTLGTG…PTFQQICSLL (330 aa)). ATP-binding positions include 619–627 (LGTGAFGKV) and Lys647. Asp810 serves as the catalytic Proton acceptor. Phosphotyrosine; by autocatalysis is present on Tyr841. The tract at residues 952–978 (VPNYTNLPSSSSSRLLRPWQRTPPVAR) is disordered. Residues 958–969 (LPSSSSSRLLRP) show a composition bias toward low complexity. Position 973 is a phosphothreonine (Thr973).

The protein belongs to the protein kinase superfamily. Tyr protein kinase family. CSF-1/PDGF receptor subfamily.

Its subcellular location is the membrane. It carries out the reaction L-tyrosyl-[protein] + ATP = O-phospho-L-tyrosyl-[protein] + ADP + H(+). Its function is as follows. Truncated version of the receptor for colony-stimulating factor 1 (CSF-1). This chain is Tyrosine-protein kinase transforming protein fms (V-FMS), found in Felidae (cat family).